We begin with the raw amino-acid sequence, 287 residues long: Co-chaperone protein DjlA (287 aa).

At 1–6 (MQIFGK) the chain is on the periplasmic side. Residues 7 to 30 (ILGAFFGFLFGGVFGALFGLFIGH) traverse the membrane as a helical segment. Residues 31–287 (QFDKARRLSQ…DLIKKEKGFK (257 aa)) are Cytoplasmic-facing. Residues 192 to 213 (GGFGGQQHQSHHSSSHGGWQQA) form a disordered region. Residues 221–287 (DAYKILGIDA…DLIKKEKGFK (67 aa)) enclose the J domain.

Homodimer.

The protein resides in the cell inner membrane. In terms of biological role, regulatory DnaK co-chaperone. Direct interaction between DnaK and DjlA is needed for the induction of the wcaABCDE operon, involved in the synthesis of a colanic acid polysaccharide capsule, possibly through activation of the RcsB/RcsC phosphotransfer signaling pathway. The colanic acid capsule may help the bacterium survive conditions outside the host. In Vibrio vulnificus (strain YJ016), this protein is Co-chaperone protein DjlA.